Consider the following 319-residue polypeptide: Formimidoylglutamase (319 aa).

Positions 131, 154, 156, 158, 248, and 250 each coordinate Mn(2+).

It belongs to the arginase family. Mn(2+) serves as cofactor.

It carries out the reaction N-formimidoyl-L-glutamate + H2O = formamide + L-glutamate. It participates in amino-acid degradation; L-histidine degradation into L-glutamate; L-glutamate from N-formimidoyl-L-glutamate (hydrolase route): step 1/1. Functionally, catalyzes the conversion of N-formimidoyl-L-glutamate to L-glutamate and formamide. This is Formimidoylglutamase from Legionella pneumophila (strain Paris).